Reading from the N-terminus, the 123-residue chain is MALLKISVVVPEGEVYTGEVKSVVLPGVEGEFGVLYGHSNMITLLQAGVIEIETENQKEHIAINWGYAEVTKERVDILADGAVFIKKGSDDRDDAISRAKKLLEDASSDRLAVSSVLAKIESL.

Belongs to the ATPase epsilon chain family. F-type ATPases have 2 components, CF(1) - the catalytic core - and CF(0) - the membrane proton channel. CF(1) has five subunits: alpha(3), beta(3), gamma(1), delta(1), epsilon(1). CF(0) has three main subunits: a, b and c.

Its subcellular location is the cell inner membrane. Functionally, produces ATP from ADP in the presence of a proton gradient across the membrane. In Helicobacter pylori (strain Shi470), this protein is ATP synthase epsilon chain.